Reading from the N-terminus, the 98-residue chain is MFEQTLTSDALVTTTHNHAAEPTQRPLRDSVQQALRNYLAQLNGQEVIDLYDMVLSEVEAPMLDVIMQYTRGNQTRAAVMMGINRGTLRKKLKRYGMN.

The H-T-H motif DNA-binding region spans 74 to 93; it reads QTRAAVMMGINRGTLRKKLK.

This sequence belongs to the transcriptional regulatory Fis family. As to quaternary structure, homodimer.

Functionally, activates ribosomal RNA transcription. Plays a direct role in upstream activation of rRNA promoters. This Aeromonas hydrophila subsp. hydrophila (strain ATCC 7966 / DSM 30187 / BCRC 13018 / CCUG 14551 / JCM 1027 / KCTC 2358 / NCIMB 9240 / NCTC 8049) protein is DNA-binding protein Fis.